Here is a 104-residue protein sequence, read N- to C-terminus: Ribonuclease P protein component 4 (104 aa).

Residues cysteine 63, cysteine 66, cysteine 89, and cysteine 92 each contribute to the Zn(2+) site.

Belongs to the eukaryotic/archaeal RNase P protein component 4 family. Consists of a catalytic RNA component and at least 4-5 protein subunits. It depends on Zn(2+) as a cofactor.

It is found in the cytoplasm. It carries out the reaction Endonucleolytic cleavage of RNA, removing 5'-extranucleotides from tRNA precursor.. In terms of biological role, part of ribonuclease P, a protein complex that generates mature tRNA molecules by cleaving their 5'-ends. This chain is Ribonuclease P protein component 4, found in Methanoregula boonei (strain DSM 21154 / JCM 14090 / 6A8).